Reading from the N-terminus, the 281-residue chain is NADPH-dependent 7-cyano-7-deazaguanine reductase (281 aa).

81–83 (VES) is a binding site for substrate. 83 to 84 (SK) serves as a coordination point for NADPH. C188 acts as the Thioimide intermediate in catalysis. Catalysis depends on D195, which acts as the Proton donor. 227 to 228 (HE) serves as a coordination point for substrate. 256–257 (RG) serves as a coordination point for NADPH. The disordered stretch occupies residues 261–281 (INPLRTSHPQGLPRNMRTARQ).

This sequence belongs to the GTP cyclohydrolase I family. QueF type 2 subfamily. In terms of assembly, homodimer.

The protein resides in the cytoplasm. The catalysed reaction is 7-aminomethyl-7-carbaguanine + 2 NADP(+) = 7-cyano-7-deazaguanine + 2 NADPH + 3 H(+). It participates in tRNA modification; tRNA-queuosine biosynthesis. Functionally, catalyzes the NADPH-dependent reduction of 7-cyano-7-deazaguanine (preQ0) to 7-aminomethyl-7-deazaguanine (preQ1). This is NADPH-dependent 7-cyano-7-deazaguanine reductase from Verminephrobacter eiseniae (strain EF01-2).